Reading from the N-terminus, the 480-residue chain is Proline--tRNA ligase (480 aa).

The protein belongs to the class-II aminoacyl-tRNA synthetase family. ProS type 3 subfamily. As to quaternary structure, homodimer.

The protein resides in the cytoplasm. The catalysed reaction is tRNA(Pro) + L-proline + ATP = L-prolyl-tRNA(Pro) + AMP + diphosphate. In terms of biological role, catalyzes the attachment of proline to tRNA(Pro) in a two-step reaction: proline is first activated by ATP to form Pro-AMP and then transferred to the acceptor end of tRNA(Pro). The protein is Proline--tRNA ligase of Chloroflexus aggregans (strain MD-66 / DSM 9485).